The chain runs to 153 residues: 3-hydroxyacyl-[acyl-carrier-protein] dehydratase FabZ (153 aa).

Histidine 54 is a catalytic residue.

It belongs to the thioester dehydratase family. FabZ subfamily.

Its subcellular location is the cytoplasm. It catalyses the reaction a (3R)-hydroxyacyl-[ACP] = a (2E)-enoyl-[ACP] + H2O. Involved in unsaturated fatty acids biosynthesis. Catalyzes the dehydration of short chain beta-hydroxyacyl-ACPs and long chain saturated and unsaturated beta-hydroxyacyl-ACPs. The polypeptide is 3-hydroxyacyl-[acyl-carrier-protein] dehydratase FabZ (Shewanella loihica (strain ATCC BAA-1088 / PV-4)).